Consider the following 563-residue polypeptide: Light-independent protochlorophyllide reductase subunit B (563 aa).

[4Fe-4S] cluster is bound at residue Asp36. The active-site Proton donor is the Asp293. Gly437 to Met438 contributes to the substrate binding site. A disordered region spans residues Glu459–Gly478.

This sequence belongs to the ChlB/BchB/BchZ family. In terms of assembly, protochlorophyllide reductase is composed of three subunits; BchL, BchN and BchB. Forms a heterotetramer of two BchB and two BchN subunits. Requires [4Fe-4S] cluster as cofactor.

It catalyses the reaction chlorophyllide a + oxidized 2[4Fe-4S]-[ferredoxin] + 2 ADP + 2 phosphate = protochlorophyllide a + reduced 2[4Fe-4S]-[ferredoxin] + 2 ATP + 2 H2O. It functions in the pathway porphyrin-containing compound metabolism; bacteriochlorophyll biosynthesis (light-independent). In terms of biological role, component of the dark-operative protochlorophyllide reductase (DPOR) that uses Mg-ATP and reduced ferredoxin to reduce ring D of protochlorophyllide (Pchlide) to form chlorophyllide a (Chlide). This reaction is light-independent. The NB-protein (BchN-BchB) is the catalytic component of the complex. In Roseiflexus castenholzii (strain DSM 13941 / HLO8), this protein is Light-independent protochlorophyllide reductase subunit B.